The primary structure comprises 286 residues: MSKLLTNTALSTFRSTRFAARQLSRNFGGIASTAQPVNLKAGYGLDYKKGLLQTQQRQIQLSGARNMFIQTQDTPNPESLKFLPGVEVLGKGNTHDFPSGTTAHGSPLAKLLFRVEGVRAVFFGADFITISKEEGAEWSLIKPEVFAVIMDFFASGLPILHESTPNADTEILEDDDETVMMIKELLDTRIRPTVQEDGGDIVFMGYENGIVKLKMQGSCSSCPSSIVTLKNGVQNMLQFYIPEVESVEQVFDAVDKMADSEFERFERNLKALKEKDSAAPAGGGTN.

Residues 1–66 (MSKLLTNTAL…RQIQLSGARN (66 aa)) constitute a mitochondrion transit peptide. The segment at 182–250 (IKELLDTRIR…IPEVESVEQV (69 aa)) is nifU. Positions 219 and 222 each coordinate [4Fe-4S] cluster.

This sequence belongs to the NifU family.

It is found in the mitochondrion. Functionally, molecular scaffold for [Fe-S] cluster assembly of mitochondrial iron-sulfur proteins. This chain is NFU1 iron-sulfur cluster scaffold homolog, mitochondrial, found in Drosophila ananassae (Fruit fly).